The primary structure comprises 172 residues: S-ribosylhomocysteine lyase (172 aa).

The Fe cation site is built by His-54, His-58, and Cys-128.

This sequence belongs to the LuxS family. Homodimer. Requires Fe cation as cofactor.

The enzyme catalyses S-(5-deoxy-D-ribos-5-yl)-L-homocysteine = (S)-4,5-dihydroxypentane-2,3-dione + L-homocysteine. Functionally, involved in the synthesis of autoinducer 2 (AI-2) which is secreted by bacteria and is used to communicate both the cell density and the metabolic potential of the environment. The regulation of gene expression in response to changes in cell density is called quorum sensing. Catalyzes the transformation of S-ribosylhomocysteine (RHC) to homocysteine (HC) and 4,5-dihydroxy-2,3-pentadione (DPD). The protein is S-ribosylhomocysteine lyase of Aliivibrio fischeri (strain MJ11) (Vibrio fischeri).